Here is a 419-residue protein sequence, read N- to C-terminus: Transcription termination factor Rho (419 aa).

In terms of domain architecture, Rho RNA-BD spans 48-123 (EISGDGVLEI…LKVDTINFDR (76 aa)). RNA-binding stretches follow at residues 61–66 (GFGFLR), 78–80 (DIY), and 108–110 (ERY). Residues 169–174 (GKGQRG), 181–186 (KAGKTI), and Arg-212 each bind ATP. The interval 284-288 (VLTGG) is RNA-binding 2.

This sequence belongs to the Rho family. In terms of assembly, homohexamer. The homohexamer assembles into an open ring structure.

Its function is as follows. Facilitates transcription termination by a mechanism that involves Rho binding to the nascent RNA, activation of Rho's RNA-dependent ATPase activity, and release of the mRNA from the DNA template. This is Transcription termination factor Rho from Pseudomonas fluorescens biotype C.